The chain runs to 349 residues: Ribosomal RNA small subunit methyltransferase H 2 (349 aa).

Residues 80-82 (GGH), aspartate 100, phenylalanine 130, aspartate 149, and glutamine 156 each bind S-adenosyl-L-methionine.

This sequence belongs to the methyltransferase superfamily. RsmH family.

The protein resides in the cytoplasm. It carries out the reaction cytidine(1402) in 16S rRNA + S-adenosyl-L-methionine = N(4)-methylcytidine(1402) in 16S rRNA + S-adenosyl-L-homocysteine + H(+). Functionally, specifically methylates the N4 position of cytidine in position 1402 (C1402) of 16S rRNA. The polypeptide is Ribosomal RNA small subunit methyltransferase H 2 (Alkaliphilus metalliredigens (strain QYMF)).